The chain runs to 164 residues: MSQSICSTGLRWLWLVVVVLIIDLGSKYLILQNFALGDTVPLFPSLNLHYARNYGAAFSFLADSGGWQRWFFAGIAIGISVILAVMMYRLKATQKLNNIAYALIIGGALGNLFDRLWHGFVVDMIDFYVGDWHFATFNLADTAICVGAALIVLEGFLPSRAKKQ.

Helical transmembrane passes span 12-32 (WLWL…LILQ), 70-90 (WFFA…MYRL), and 102-122 (ALII…GFVV). Catalysis depends on residues Asp-123 and Asp-141. Residues 137 to 157 (FNLADTAICVGAALIVLEGFL) traverse the membrane as a helical segment.

Belongs to the peptidase A8 family.

It localises to the cell inner membrane. The catalysed reaction is Release of signal peptides from bacterial membrane prolipoproteins. Hydrolyzes -Xaa-Yaa-Zaa-|-(S,diacylglyceryl)Cys-, in which Xaa is hydrophobic (preferably Leu), and Yaa (Ala or Ser) and Zaa (Gly or Ala) have small, neutral side chains.. It participates in protein modification; lipoprotein biosynthesis (signal peptide cleavage). In terms of biological role, this protein specifically catalyzes the removal of signal peptides from prolipoproteins. This chain is Lipoprotein signal peptidase, found in Shigella boydii serotype 4 (strain Sb227).